Reading from the N-terminus, the 367-residue chain is Cobalt-precorrin-5B C(1)-methyltransferase (367 aa).

This sequence belongs to the CbiD family.

The catalysed reaction is Co-precorrin-5B + S-adenosyl-L-methionine = Co-precorrin-6A + S-adenosyl-L-homocysteine. Its pathway is cofactor biosynthesis; adenosylcobalamin biosynthesis; cob(II)yrinate a,c-diamide from sirohydrochlorin (anaerobic route): step 6/10. Its function is as follows. Catalyzes the methylation of C-1 in cobalt-precorrin-5B to form cobalt-precorrin-6A. The polypeptide is Cobalt-precorrin-5B C(1)-methyltransferase (Leptospira interrogans serogroup Icterohaemorrhagiae serovar copenhageni (strain Fiocruz L1-130)).